Here is a 664-residue protein sequence, read N- to C-terminus: Intraflagellar transport protein 70B (664 aa).

7 TPR repeats span residues Asp-11–Ser-44, Arg-45–Leu-78, Leu-153–Arg-186, Asp-188–Gln-220, Leu-385–Thr-418, Ile-423–His-456, and Val-458–Asn-491. Positions Met-509–Tyr-532 form a coiled coil. Residues Cys-543–Lys-576 form a TPR 8 repeat.

Belongs to the TTC30/dfy-1/fleer family. In terms of assembly, interacts with the IFT B complex components IFT27, IFT46, IFT74, IFT52, IFT57, IFT80, IFT81 and IFT88. Interacts with KIF17.

It localises to the cell projection. The protein resides in the cilium. Functionally, required for polyglutamylation of axonemal tubulin. Plays a role in anterograde intraflagellar transport (IFT), the process by which cilia precursors are transported from the base of the cilium to the site of their incorporation at the tip. The chain is Intraflagellar transport protein 70B (IFT70B) from Bos taurus (Bovine).